We begin with the raw amino-acid sequence, 106 residues long: MMKVLVVFALLVTLISYSSSEGIDDLEADELLSLMANEQTRAKACTPRYYDCSHDRHSCCRSSMFKDVCTCFYPEGGDNKEVCTCQQPKHLKYMEKATDKIKNLFG.

The N-terminal stretch at 1 to 20 is a signal peptide; that stretch reads MMKVLVVFALLVTLISYSSS. Residues 21-41 constitute a propeptide that is removed on maturation; it reads EGIDDLEADELLSLMANEQTR. 4 cysteine pairs are disulfide-bonded: C45-C60, C52-C69, C59-C85, and C71-C83.

This sequence belongs to the neurotoxin 19 (CSTX) family. 02 (D7) subfamily. In terms of tissue distribution, expressed by the venom gland.

The protein localises to the secreted. The polypeptide is Toxin-like structure LSTX-D7 (Lycosa singoriensis (Wolf spider)).